A 522-amino-acid chain; its full sequence is Sorting nexin-1 (522 aa).

Disordered stretches follow at residues 1–84 and 115–142; these read MASG…QDQE and SLPP…QEDQ. Phosphoserine is present on residues Ser32 and Ser39. Positions 35 to 45 are enriched in acidic residues; sequence EAGDSDTEGED. 2 positions are modified to phosphothreonine: Thr41 and Thr48. Positions 55–73 are enriched in polar residues; the sequence is KHQSPKITTSLLPINNGSK. Ser58 and Ser72 each carry phosphoserine. Positions 132-142 are enriched in acidic residues; it reads EELEEEEQEDQ. The PX domain occupies 143-272; sequence FDLTVGITDP…EFLEKEELPR (130 aa). A 1,2-diacyl-sn-glycero-3-phospho-(1D-myo-inositol-3-phosphate) is bound by residues Arg186, Ser188, and Lys214. The residue at position 188 (Ser188) is a Phosphoserine. The residue at position 237 (Lys237) is an N6-acetyllysine. Arg238 contributes to the a 1,2-diacyl-sn-glycero-3-phospho-(1D-myo-inositol-3-phosphate) binding site. Position 280 is a phosphoserine (Ser280). Residues 281-298 are membrane-binding amphipathic helix; that stretch reads GAGLLKMFNKATDAVSKM. The 221-residue stretch at 302 to 522 folds into the BAR domain; sequence MNESDIWFEE…AFLPEAKAIS (221 aa).

It belongs to the sorting nexin family. In terms of assembly, predominantly forms heterodimers with BAR domain-containing sorting nexins SNX5, SNX6 and SNX32; can self-associate to form homodimers. The heterodimers are proposed to self-assemble into helical arrays on the membrane to stabilize and expand local membrane curvature underlying endosomal tubule formation. Thought to be a component of the originally described retromer complex (also called SNX-BAR retromer) which is a pentamer containing the heterotrimeric retromer cargo-selective complex (CSC), also described as vacuolar protein sorting subcomplex (VPS) and a heterodimeric membrane-deforming subcomplex formed between SNX1 or SNX2 and SNX5 or SNX6 (also called SNX-BAR subcomplex); the respective CSC and SNX-BAR subcomplexes associate with low affinity. Interacts with SNX5, SNX6, SNX32, VPS26A, VPS29, VPS35, DRD5, DENND5A, KALRN, RHOG (GDP-bound form). The interaction with SNX2 is reported controversially. Interacts with DNAJC13; prevented by presence of HGS. Interacts with HGS.

It is found in the endosome membrane. The protein localises to the golgi apparatus. Its subcellular location is the trans-Golgi network membrane. It localises to the early endosome membrane. The protein resides in the cell projection. It is found in the lamellipodium. Its function is as follows. Involved in several stages of intracellular trafficking. Interacts with membranes containing phosphatidylinositol 3-phosphate (PtdIns(3P)) or phosphatidylinositol 3,5-bisphosphate (PtdIns(3,5)P2). Acts in part as component of the retromer membrane-deforming SNX-BAR subcomplex. The SNX-BAR retromer mediates retrograde transport of cargo proteins from endosomes to the trans-Golgi network (TGN) and is involved in endosome-to-plasma membrane transport for cargo protein recycling. The SNX-BAR subcomplex functions to deform the donor membrane into a tubular profile called endosome-to-TGN transport carrier (ETC). Can sense membrane curvature and has in vitro vesicle-to-membrane remodeling activity. Involved in retrograde endosome-to-TGN transport of lysosomal enzyme receptors (IGF2R, M6PR and SORT1) and Shiginella dysenteria toxin stxB. Plays a role in targeting ligand-activated EGFR to the lysosomes for degradation after endocytosis from the cell surface and release from the Golgi. Involvement in retromer-independent endocytic trafficking of P2RY1 and lysosomal degradation of protease-activated receptor-1/F2R. Promotes KALRN- and RHOG-dependent but retromer-independent membrane remodeling such as lamellipodium formation; the function is dependent on GEF activity of KALRN. Required for endocytosis of DRD5 upon agonist stimulation but not for basal receptor trafficking. This chain is Sorting nexin-1 (SNX1), found in Homo sapiens (Human).